The sequence spans 229 residues: Peptide methionine sulfoxide reductase B3, chloroplastic (229 aa).

A chloroplast-targeting transit peptide spans 1–71 (MGVQHLLKLR…NHNQWAASRC (71 aa)). One can recognise a MsrB domain in the interval 102-223 (EEEWEAILSP…NSISLKFIPA (122 aa)). Positions 141, 144, 187, and 190 each coordinate Zn(2+). An intrachain disulfide couples Cys159 to Cys212. Catalysis depends on Cys212, which acts as the Nucleophile.

It belongs to the MsrB Met sulfoxide reductase family. It depends on Zn(2+) as a cofactor.

It localises to the plastid. Its subcellular location is the chloroplast. The enzyme catalyses L-methionyl-[protein] + [thioredoxin]-disulfide + H2O = L-methionyl-(R)-S-oxide-[protein] + [thioredoxin]-dithiol. In terms of biological role, catalyzes the reduction of methionine sulfoxide (MetSO) to methionine in proteins. Plays a protective role against oxidative stress by restoring activity to proteins that have been inactivated by methionine oxidation. MSRB family specifically reduces the MetSO R-enantiomer. This chain is Peptide methionine sulfoxide reductase B3, chloroplastic (MSRB3), found in Oryza sativa subsp. japonica (Rice).